The primary structure comprises 213 residues: Ras-related protein Rab-39B (213 aa).

The GTP site is built by S17, G20, K21, S22, C23, S37, and T40. Residue S22 coordinates Mg(2+). Positions 35-43 are switch-I; sequence QVSDPTVGV. Mg(2+) contacts are provided by T40 and D64. GTP contacts are provided by G67, H123, K124, D126, A154, and R155. Positions 67 to 83 are switch-II; the sequence is GQERFRSITRAYYRNSV. At S201 the chain carries Phosphoserine. Residues C211 and C213 are each lipidated (S-geranylgeranyl cysteine). Residue C213 is modified to Cysteine methyl ester.

Belongs to the small GTPase superfamily. Rab family. As to quaternary structure, interacts (GDP-bound) with C9orf72; C9orf72 in complex with SMCR8 acts as a GEF for RAB39B. Interacts (in GTP-bound form) with PICK1 (via PDZ domain); a PICK1 homodimer may allow simultaneous association of RAB39B and GRIA2 to PICK1 which is involved in GRIA2 trafficking. Interacts with isoform c of RASSF1; the interaction is strong. Interacts with isoform a of RASSF1; the interaction is weak. Interacts with the DLG4/PSD-95. Interacts (GTP-bound) with HOPS complex components VPS39 and VPS41. Mg(2+) is required as a cofactor. In terms of tissue distribution, highly expressed in the brain.

Its subcellular location is the cell membrane. The protein localises to the cytoplasmic vesicle membrane. The protein resides in the golgi apparatus. It localises to the cytoplasmic vesicle. It is found in the autophagosome membrane. Its subcellular location is the autolysosome membrane. It carries out the reaction GTP + H2O = GDP + phosphate + H(+). Its activity is regulated as follows. Regulated by guanine nucleotide exchange factors (GEFs) including C9orf72-SMCR8 complex, which promote the exchange of bound GDP for free GTP. Regulated by GTPase activating proteins (GAPs) which increase the GTP hydrolysis activity. Inhibited by GDP dissociation inhibitors (GDIs). In terms of biological role, the small GTPases Rab are key regulators of intracellular membrane trafficking, from the formation of transport vesicles to their fusion with membranes. Rabs cycle between an inactive GDP-bound form and an active GTP-bound form that is able to recruit to membranes different sets of downstream effectors directly responsible for vesicle formation, movement, tethering and fusion. RAB39B is involved in autophagy and may function in autophagosome formation. Binds downstream effector PICK1 to ensure selectively GRIA2 exit from the endoplasmic reticulum to the Golgi and to regulate AMPAR composition at the post-synapses and thus synaptic transmission. May regulate the homeostasis of SNCA/alpha-synuclein. This chain is Ras-related protein Rab-39B, found in Homo sapiens (Human).